A 477-amino-acid polypeptide reads, in one-letter code: MKVTLPEFERAGVMVVGDVMLDRYWYGPTSRISPEAPVPVVKVNTIEERPGGAANVAMNIASLGANARLVGLTGIDDAARALSKSLADVNVKCDFVSVPTHPTITKLRVLSRNQQLIRLDFEEGFEGVDPQPLHERINQALSSIGALVLSDYAKGALASVQQMIQLARKAGVPVLIDPKGTDFERYRGATLLTPNLSEFEAVVGKCKTEEEIVERGMKLIADYELSALLVTRSEQGMSLLQPGKEPLHMPTQAQEVYDVTGAGDTVIGVLAATLAAGNSLEEACFFANAAAGVVVGKLGTSTVSPIELENAVRGRADTGFGVMTEEELKLAVAAARKRGEKVVMTNGVFDILHAGHVSYLANARKLGDRLIVAVNSDASTKRLKGDSRPVNPLEQRMIVLGALEAVDWVVSFEEDTPQRLIAGILPDLLVKGGDYKPEEIAGSKEVWANGGEVLVLNFEDGCSTTNIIKKIQQDKKG.

Residues 1–318 form a ribokinase region; that stretch reads MKVTLPEFER…ENAVRGRADT (318 aa). At lysine 179 the chain carries N6-acetyllysine. An ATP-binding site is contributed by 195–198; the sequence is NLSE. Aspartate 264 is an active-site residue. Residues 344-477 form a cytidylyltransferase region; that stretch reads MTNGVFDILH…IKKIQQDKKG (134 aa).

This sequence in the N-terminal section; belongs to the carbohydrate kinase PfkB family. It in the C-terminal section; belongs to the cytidylyltransferase family. Homodimer.

It carries out the reaction D-glycero-beta-D-manno-heptose 7-phosphate + ATP = D-glycero-beta-D-manno-heptose 1,7-bisphosphate + ADP + H(+). The enzyme catalyses D-glycero-beta-D-manno-heptose 1-phosphate + ATP + H(+) = ADP-D-glycero-beta-D-manno-heptose + diphosphate. The protein operates within nucleotide-sugar biosynthesis; ADP-L-glycero-beta-D-manno-heptose biosynthesis; ADP-L-glycero-beta-D-manno-heptose from D-glycero-beta-D-manno-heptose 7-phosphate: step 1/4. Its pathway is nucleotide-sugar biosynthesis; ADP-L-glycero-beta-D-manno-heptose biosynthesis; ADP-L-glycero-beta-D-manno-heptose from D-glycero-beta-D-manno-heptose 7-phosphate: step 3/4. Functionally, catalyzes the phosphorylation of D-glycero-D-manno-heptose 7-phosphate at the C-1 position to selectively form D-glycero-beta-D-manno-heptose-1,7-bisphosphate. Catalyzes the ADP transfer from ATP to D-glycero-beta-D-manno-heptose 1-phosphate, yielding ADP-D-glycero-beta-D-manno-heptose. The protein is Bifunctional protein HldE of Escherichia fergusonii (strain ATCC 35469 / DSM 13698 / CCUG 18766 / IAM 14443 / JCM 21226 / LMG 7866 / NBRC 102419 / NCTC 12128 / CDC 0568-73).